The sequence spans 126 residues: Small ribosomal subunit protein uS11 (126 aa).

Belongs to the universal ribosomal protein uS11 family. As to quaternary structure, part of the 30S ribosomal subunit. Interacts with proteins S7 and S18. Binds to IF-3.

Located on the platform of the 30S subunit, it bridges several disparate RNA helices of the 16S rRNA. Forms part of the Shine-Dalgarno cleft in the 70S ribosome. The protein is Small ribosomal subunit protein uS11 of Ehrlichia chaffeensis (strain ATCC CRL-10679 / Arkansas).